The chain runs to 290 residues: Glucuronoxylan 4-O-methyltransferase 2 (290 aa).

Residues 8-28 traverse the membrane as a helical segment; sequence FISSKLIFICCSILVLFILFL.

Belongs to the methyltransferase superfamily. Expressed in roots, rosette leaves and stems.

The protein localises to the golgi apparatus membrane. It carries out the reaction glucuronoxylan D-glucuronate + n S-adenosyl-L-methionine = glucuronoxylan 4-O-methyl-D-glucuronate + n S-adenosyl-L-homocysteine + n H(+). Methyltransferase catalyzing 4-O-methylation of glucuronic acid side chains on xylan. The protein is Glucuronoxylan 4-O-methyltransferase 2 (GXM2) of Arabidopsis thaliana (Mouse-ear cress).